A 600-amino-acid chain; its full sequence is Translation initiation factor IF-2 (600 aa).

The 168-residue stretch at 112–279 (ERAPIITVMG…AINLQAEILE (168 aa)) folds into the tr-type G domain. Positions 121–128 (GHVDHGKT) are G1. A GTP-binding site is contributed by 121–128 (GHVDHGKT). Residues 146–150 (GITQH) are G2. A G3 region spans residues 167-170 (DTPG). GTP contacts are provided by residues 167 to 171 (DTPGH) and 221 to 224 (NKMD). The G4 stretch occupies residues 221–224 (NKMD). The interval 257–259 (SAL) is G5.

It belongs to the TRAFAC class translation factor GTPase superfamily. Classic translation factor GTPase family. IF-2 subfamily.

It localises to the cytoplasm. Functionally, one of the essential components for the initiation of protein synthesis. Protects formylmethionyl-tRNA from spontaneous hydrolysis and promotes its binding to the 30S ribosomal subunits. Also involved in the hydrolysis of GTP during the formation of the 70S ribosomal complex. The protein is Translation initiation factor IF-2 of Mycoplasma mobile (strain ATCC 43663 / 163K / NCTC 11711) (Mesomycoplasma mobile).